A 474-amino-acid chain; its full sequence is Trehalose-6-phosphate synthase (474 aa).

Residue Arg-10 participates in D-glucose 6-phosphate binding. Residue 22–23 (GG) participates in UDP-alpha-D-glucose binding. Positions 77 and 131 each coordinate D-glucose 6-phosphate. Residues Arg-263 and Lys-268 each contribute to the UDP-alpha-D-glucose site. Arg-301 contacts D-glucose 6-phosphate. Residues Phe-340 and 366–370 (LVAKE) each bind UDP-alpha-D-glucose.

It belongs to the glycosyltransferase 20 family. Homotetramer.

It catalyses the reaction D-glucose 6-phosphate + UDP-alpha-D-glucose = alpha,alpha-trehalose 6-phosphate + UDP + H(+). Its pathway is glycan biosynthesis; trehalose biosynthesis. Functionally, probably involved in the osmoprotection via the biosynthesis of trehalose. Catalyzes the transfer of glucose from UDP-alpha-D-glucose (UDP-Glc) to D-glucose 6-phosphate (Glc-6-P) to form trehalose-6-phosphate. Acts with retention of the anomeric configuration of the UDP-sugar donor. The protein is Trehalose-6-phosphate synthase of Escherichia coli O9:H4 (strain HS).